Consider the following 427-residue polypeptide: Dihydroorotase (427 aa).

Residues H58 and H60 each contribute to the Zn(2+) site. Residues 60-62 and N92 each bind substrate; that span reads HLR. Zn(2+) contacts are provided by D150, H177, and H230. Substrate is bound at residue N276. Residue D303 participates in Zn(2+) binding. Residue D303 is part of the active site. Residues H307 and 321–322 contribute to the substrate site; that span reads FG.

The protein belongs to the metallo-dependent hydrolases superfamily. DHOase family. Class I DHOase subfamily. The cofactor is Zn(2+).

It catalyses the reaction (S)-dihydroorotate + H2O = N-carbamoyl-L-aspartate + H(+). It functions in the pathway pyrimidine metabolism; UMP biosynthesis via de novo pathway; (S)-dihydroorotate from bicarbonate: step 3/3. Functionally, catalyzes the reversible cyclization of carbamoyl aspartate to dihydroorotate. The chain is Dihydroorotase from Macrococcus caseolyticus (strain JCSC5402) (Macrococcoides caseolyticum).